The following is a 260-amino-acid chain: Carbonic anhydrase 2 (260 aa).

One can recognise an Alpha-carbonic anhydrase domain in the interval 3-259; the sequence is HGWGYADHNG…LKDRKVCASF (257 aa). Catalysis depends on His-64, which acts as the Proton donor/acceptor. Zn(2+) is bound by residues His-94, His-96, and His-119. 198–199 lines the substrate pocket; it reads TT.

The protein belongs to the alpha-carbonic anhydrase family. Requires Zn(2+) as cofactor.

Its subcellular location is the cytoplasm. The catalysed reaction is hydrogencarbonate + H(+) = CO2 + H2O. Catalyzes the reversible hydration of carbon dioxide. This Pseudaspius hakonensis (Big-scaled redfin) protein is Carbonic anhydrase 2 (ca2).